Reading from the N-terminus, the 444-residue chain is Phosphoglucosamine mutase (444 aa).

S102 (phosphoserine intermediate) is an active-site residue. Residues S102, D239, D241, and D243 each contribute to the Mg(2+) site. Position 102 is a phosphoserine (S102).

Belongs to the phosphohexose mutase family. It depends on Mg(2+) as a cofactor. In terms of processing, activated by phosphorylation.

The enzyme catalyses alpha-D-glucosamine 1-phosphate = D-glucosamine 6-phosphate. Functionally, catalyzes the conversion of glucosamine-6-phosphate to glucosamine-1-phosphate. This chain is Phosphoglucosamine mutase, found in Mycolicibacterium paratuberculosis (strain ATCC BAA-968 / K-10) (Mycobacterium paratuberculosis).